Reading from the N-terminus, the 419-residue chain is Tyrosine--tRNA ligase (419 aa).

Residue Tyr34 coordinates L-tyrosine. The 'HIGH' region signature appears at 39–48 (PSGDSMHIGH). L-tyrosine contacts are provided by Tyr168 and Gln172. The 'KMSKS' region motif lies at 230-234 (KFGKS). Lys233 contributes to the ATP binding site. In terms of domain architecture, S4 RNA-binding spans 352-418 (ANLVDWLVTL…GKKKYFLVSY (67 aa)).

Belongs to the class-I aminoacyl-tRNA synthetase family. TyrS type 1 subfamily. Homodimer.

The protein localises to the cytoplasm. It catalyses the reaction tRNA(Tyr) + L-tyrosine + ATP = L-tyrosyl-tRNA(Tyr) + AMP + diphosphate + H(+). Functionally, catalyzes the attachment of tyrosine to tRNA(Tyr) in a two-step reaction: tyrosine is first activated by ATP to form Tyr-AMP and then transferred to the acceptor end of tRNA(Tyr). This Listeria monocytogenes serotype 4a (strain HCC23) protein is Tyrosine--tRNA ligase.